The following is a 176-amino-acid chain: MKFVSDLLSVILFFATYTVTKNMIAAAAVALVAGVVQAAFLYWKHKRLDTMQWVGLVLIVVFGGATIVLGDSRFIMWKPTVLFWCGALFLLGSHLAGKNGLKASIGREIQLPDAVWGKLTYMWVGFLIFMGIANWFVFTRFEAQWVNYKMFGSTALMLFFFIIQGIYLSTYLKKED.

5 helical membrane passes run methionine 23–tryptophan 43, threonine 50–glycine 70, phenylalanine 74–histidine 94, leucine 119–threonine 139, and methionine 150–threonine 170.

This sequence belongs to the YciB family.

It localises to the cell inner membrane. Plays a role in cell envelope biogenesis, maintenance of cell envelope integrity and membrane homeostasis. In Neisseria gonorrhoeae (strain ATCC 700825 / FA 1090), this protein is Inner membrane-spanning protein YciB.